A 351-amino-acid chain; its full sequence is C-X-C chemokine receptor type 1 (351 aa).

Residues M1 to T46 lie on the Extracellular side of the membrane. N-linked (GlcNAc...) asparagine glycans are attached at residues N3 and N17. A helical transmembrane segment spans residues Y47 to Y67. Topologically, residues R68 to D76 are cytoplasmic. Residues V77–A97 traverse the membrane as a helical segment. Over A98–K112 the chain is Extracellular. An intrachain disulfide couples C111 to C188. The chain crosses the membrane as a helical span at residues V113–S133. Over V134–V154 the chain is Cytoplasmic. The chain crosses the membrane as a helical span at residues K155–F175. The Extracellular segment spans residues R176–R204. N-linked (GlcNAc...) asparagine glycans are attached at residues N182 and N194. Residues I205 to F225 form a helical membrane-spanning segment. The Cytoplasmic segment spans residues T226–R243. A helical membrane pass occupies residues V244 to L264. Residues A265–D289 are Extracellular-facing. A helical transmembrane segment spans residues A290–G310. Residues Q311–L351 are Cytoplasmic-facing.

The protein belongs to the G-protein coupled receptor 1 family. In terms of assembly, interacts with IL8. Interacts with GNAI2.

The protein localises to the cell membrane. Its function is as follows. Receptor to interleukin-8, which is a powerful neutrophils chemotactic factor. Binding of IL-8 to the receptor causes activation of neutrophils. This response is mediated via a G-protein that activates a phosphatidylinositol-calcium second messenger system. This is C-X-C chemokine receptor type 1 (CXCR1) from Macaca mulatta (Rhesus macaque).